The primary structure comprises 90 residues: Probable Fe(2+)-trafficking protein (90 aa).

It belongs to the Fe(2+)-trafficking protein family.

Functionally, could be a mediator in iron transactions between iron acquisition and iron-requiring processes, such as synthesis and/or repair of Fe-S clusters in biosynthetic enzymes. The chain is Probable Fe(2+)-trafficking protein from Coxiella burnetii (strain CbuK_Q154) (Coxiella burnetii (strain Q154)).